A 176-amino-acid chain; its full sequence is Ribosome maturation factor RimM (176 aa).

The 80-residue stretch at 97–176 (DSEFYHRDLI…QILVDWDPDF (80 aa)) folds into the PRC barrel domain.

The protein belongs to the RimM family. Binds ribosomal protein uS19.

The protein resides in the cytoplasm. Functionally, an accessory protein needed during the final step in the assembly of 30S ribosomal subunit, possibly for assembly of the head region. Essential for efficient processing of 16S rRNA. May be needed both before and after RbfA during the maturation of 16S rRNA. It has affinity for free ribosomal 30S subunits but not for 70S ribosomes. The chain is Ribosome maturation factor RimM from Shewanella frigidimarina (strain NCIMB 400).